The chain runs to 375 residues: Putative prophage phiRv2 integrase (375 aa).

The region spanning 75–153 (APFGEYAEGW…LLRAIMQTAL (79 aa)) is the Core-binding (CB) domain. The region spanning 175–364 (HKIRPATLDE…AKGRDREIAA (190 aa)) is the Tyr recombinase domain. Residues R209, H316, R319, and H342 contribute to the active site. Residue Y351 is the O-(3'-phospho-DNA)-tyrosine intermediate of the active site.

Belongs to the 'phage' integrase family.

In terms of biological role, integrase is necessary for integration of the phage into the host genome by site-specific recombination. In conjunction with excisionase, integrase is also necessary for excision of the prophage from the host genome. The sequence is that of Putative prophage phiRv2 integrase from Mycobacterium tuberculosis (strain CDC 1551 / Oshkosh).